Here is a 635-residue protein sequence, read N- to C-terminus: Threonine--tRNA ligase (635 aa).

A TGS domain is found at 1–61; sequence MIKITLKDGK…HKDSSLEILT (61 aa). Positions 242–532 are catalytic; sequence DHRKLGKELD…LIEQYAGAFP (291 aa). Positions 333, 384, and 509 each coordinate Zn(2+).

Belongs to the class-II aminoacyl-tRNA synthetase family. Homodimer. It depends on Zn(2+) as a cofactor.

The protein localises to the cytoplasm. The enzyme catalyses tRNA(Thr) + L-threonine + ATP = L-threonyl-tRNA(Thr) + AMP + diphosphate + H(+). In terms of biological role, catalyzes the attachment of threonine to tRNA(Thr) in a two-step reaction: L-threonine is first activated by ATP to form Thr-AMP and then transferred to the acceptor end of tRNA(Thr). Also edits incorrectly charged L-seryl-tRNA(Thr). In Clostridium botulinum (strain 657 / Type Ba4), this protein is Threonine--tRNA ligase.